Reading from the N-terminus, the 510-residue chain is tRNA-2-methylthio-N(6)-dimethylallyladenosine synthase (510 aa).

Residues 19–135 form the MTTase N-terminal domain; that stretch reads RTFEVRTYGC…LPALLDRARH (117 aa). [4Fe-4S] cluster-binding residues include Cys28, Cys64, Cys98, Cys172, Cys176, and Cys179. Positions 158–394 constitute a Radical SAM core domain; that stretch reads RESSYAAWVS…IELQERISLE (237 aa). Positions 397 to 467 constitute a TRAM domain; that stretch reads TAQIGRRVEL…PHHLIADAGL (71 aa). Residues 477-510 form a disordered region; sequence DAHAAGQKPRTGVGLGMPAVGAPDPLPATTGCAR.

This sequence belongs to the methylthiotransferase family. MiaB subfamily. Monomer. Requires [4Fe-4S] cluster as cofactor.

It localises to the cytoplasm. The enzyme catalyses N(6)-dimethylallyladenosine(37) in tRNA + (sulfur carrier)-SH + AH2 + 2 S-adenosyl-L-methionine = 2-methylsulfanyl-N(6)-dimethylallyladenosine(37) in tRNA + (sulfur carrier)-H + 5'-deoxyadenosine + L-methionine + A + S-adenosyl-L-homocysteine + 2 H(+). Its function is as follows. Catalyzes the methylthiolation of N6-(dimethylallyl)adenosine (i(6)A), leading to the formation of 2-methylthio-N6-(dimethylallyl)adenosine (ms(2)i(6)A) at position 37 in tRNAs that read codons beginning with uridine. This is tRNA-2-methylthio-N(6)-dimethylallyladenosine synthase from Mycolicibacterium vanbaalenii (strain DSM 7251 / JCM 13017 / BCRC 16820 / KCTC 9966 / NRRL B-24157 / PYR-1) (Mycobacterium vanbaalenii).